The sequence spans 700 residues: Elongation factor G (700 aa).

Positions 10 to 286 constitute a tr-type G domain; sequence NKVRNIGIMA…AVIDYLPNPL (277 aa). GTP-binding positions include 19 to 26, 83 to 87, and 137 to 140; these read AHIDAGKT, DTPGH, and NKMD.

It belongs to the TRAFAC class translation factor GTPase superfamily. Classic translation factor GTPase family. EF-G/EF-2 subfamily.

It is found in the cytoplasm. In terms of biological role, catalyzes the GTP-dependent ribosomal translocation step during translation elongation. During this step, the ribosome changes from the pre-translocational (PRE) to the post-translocational (POST) state as the newly formed A-site-bound peptidyl-tRNA and P-site-bound deacylated tRNA move to the P and E sites, respectively. Catalyzes the coordinated movement of the two tRNA molecules, the mRNA and conformational changes in the ribosome. The polypeptide is Elongation factor G (Rhodococcus erythropolis (strain PR4 / NBRC 100887)).